The primary structure comprises 720 residues: GTPase-activating protein gyp2 (720 aa).

A GRAM domain is found at 20–85; the sequence is LDPASFFRIN…AAVRKLEREN (66 aa). Residues 216-404 enclose the Rab-GAP TBC domain; that stretch reads GIPNNLRADI…RILDCLFVNG (189 aa).

The protein localises to the cytoplasm. The protein resides in the nucleus. Functionally, stimulates specifically the GTPase activity of ypt2 and ryh1. Inactivates ryh1 during recycling between the endosome and the Golgi compartments. In Schizosaccharomyces pombe (strain 972 / ATCC 24843) (Fission yeast), this protein is GTPase-activating protein gyp2.